Consider the following 255-residue polypeptide: Pyrroloquinoline-quinone synthase (255 aa).

It belongs to the PqqC family.

It catalyses the reaction 6-(2-amino-2-carboxyethyl)-7,8-dioxo-1,2,3,4,7,8-hexahydroquinoline-2,4-dicarboxylate + 3 O2 = pyrroloquinoline quinone + 2 H2O2 + 2 H2O + H(+). Its pathway is cofactor biosynthesis; pyrroloquinoline quinone biosynthesis. In terms of biological role, ring cyclization and eight-electron oxidation of 3a-(2-amino-2-carboxyethyl)-4,5-dioxo-4,5,6,7,8,9-hexahydroquinoline-7,9-dicarboxylic-acid to PQQ. The polypeptide is Pyrroloquinoline-quinone synthase (Cereibacter sphaeroides (strain ATCC 17029 / ATH 2.4.9) (Rhodobacter sphaeroides)).